A 231-amino-acid polypeptide reads, in one-letter code: 7-cyano-7-deazaguanine synthase (231 aa).

8–18 (FSGGQDSTTCL) lines the ATP pocket. Zn(2+) contacts are provided by Cys188, Cys197, Cys200, and Cys203.

It belongs to the QueC family. Zn(2+) is required as a cofactor.

It carries out the reaction 7-carboxy-7-deazaguanine + NH4(+) + ATP = 7-cyano-7-deazaguanine + ADP + phosphate + H2O + H(+). It functions in the pathway purine metabolism; 7-cyano-7-deazaguanine biosynthesis. Catalyzes the ATP-dependent conversion of 7-carboxy-7-deazaguanine (CDG) to 7-cyano-7-deazaguanine (preQ(0)). This chain is 7-cyano-7-deazaguanine synthase, found in Erwinia tasmaniensis (strain DSM 17950 / CFBP 7177 / CIP 109463 / NCPPB 4357 / Et1/99).